Consider the following 863-residue polypeptide: Leucine--tRNA ligase (863 aa).

The 'HIGH' region motif lies at proline 42–histidine 52. A 'KMSKS' region motif is present at residues lysine 623–serine 627. Position 626 (lysine 626) interacts with ATP.

Belongs to the class-I aminoacyl-tRNA synthetase family.

Its subcellular location is the cytoplasm. It catalyses the reaction tRNA(Leu) + L-leucine + ATP = L-leucyl-tRNA(Leu) + AMP + diphosphate. The chain is Leucine--tRNA ligase from Paraburkholderia xenovorans (strain LB400).